The following is a 142-amino-acid chain: Large ribosomal subunit protein uL13 (142 aa).

The protein belongs to the universal ribosomal protein uL13 family. In terms of assembly, part of the 50S ribosomal subunit.

This protein is one of the early assembly proteins of the 50S ribosomal subunit, although it is not seen to bind rRNA by itself. It is important during the early stages of 50S assembly. The sequence is that of Large ribosomal subunit protein uL13 from Geobacter sp. (strain M21).